The following is a 472-amino-acid chain: Glycine--tRNA ligase (472 aa).

Residues arginine 109 and glutamate 174 each coordinate substrate. Residues 206–208 (RNE), 216–221 (FRTREF), 293–294 (EL), and 337–340 (GLTR) contribute to the ATP site. Substrate is bound at residue 221-225 (FEQME). 333–337 (EPAAG) contacts substrate.

This sequence belongs to the class-II aminoacyl-tRNA synthetase family. As to quaternary structure, homodimer.

The protein localises to the cytoplasm. The enzyme catalyses tRNA(Gly) + glycine + ATP = glycyl-tRNA(Gly) + AMP + diphosphate. Functionally, catalyzes the attachment of glycine to tRNA(Gly). This chain is Glycine--tRNA ligase, found in Cutibacterium acnes (strain DSM 16379 / KPA171202) (Propionibacterium acnes).